The primary structure comprises 544 residues: uncharacterized protein (544 aa).

A run of 14 helical transmembrane segments spans residues 31-51 (ILVF…AALA), 52-72 (GSVL…IGLL), 84-104 (LPWM…QWLI), 116-136 (WGLF…YTTV), 162-182 (FAFS…IAAG), 191-211 (FGEL…WSAL), 230-250 (LAPL…AKSF), 257-277 (GFDY…GFGF), 318-338 (FLFV…TASI), 356-376 (TIAL…QALA), 383-403 (VIYF…WLVQ), 407-427 (VALL…AYLI), 450-470 (FFYA…LFLV), and 501-521 (FAVA…AIFY).

Belongs to the sodium:galactoside symporter (TC 2.A.2) family.

Its subcellular location is the cell membrane. This is an uncharacterized protein from Synechocystis sp. (strain ATCC 27184 / PCC 6803 / Kazusa).